Here is a 380-residue protein sequence, read N- to C-terminus: Chaperone protein DnaJ (380 aa).

The J domain occupies 5 to 70 (DYYEVLGVER…SKRAAYDQYG (66 aa)). The CR-type zinc-finger motif lies at 139 to 217 (GTTVNIRVPT…CHGEGRVEES (79 aa)). Cysteine 152, cysteine 155, cysteine 169, cysteine 172, cysteine 191, cysteine 194, cysteine 205, and cysteine 208 together coordinate Zn(2+). 4 CXXCXGXG motif repeats span residues 152 to 159 (CKPCDGSG), 169 to 176 (CPTCGGIG), 191 to 198 (CPRCHGHG), and 205 to 212 (CDSCHGEG).

Belongs to the DnaJ family. In terms of assembly, homodimer. Requires Zn(2+) as cofactor.

It is found in the cytoplasm. Its function is as follows. Participates actively in the response to hyperosmotic and heat shock by preventing the aggregation of stress-denatured proteins and by disaggregating proteins, also in an autonomous, DnaK-independent fashion. Unfolded proteins bind initially to DnaJ; upon interaction with the DnaJ-bound protein, DnaK hydrolyzes its bound ATP, resulting in the formation of a stable complex. GrpE releases ADP from DnaK; ATP binding to DnaK triggers the release of the substrate protein, thus completing the reaction cycle. Several rounds of ATP-dependent interactions between DnaJ, DnaK and GrpE are required for fully efficient folding. Also involved, together with DnaK and GrpE, in the DNA replication of plasmids through activation of initiation proteins. The sequence is that of Chaperone protein DnaJ from Pseudomonas syringae pv. tomato (strain ATCC BAA-871 / DC3000).